The primary structure comprises 259 residues: Thiazole synthase (259 aa).

Lys95 (schiff-base intermediate with DXP) is an active-site residue. 1-deoxy-D-xylulose 5-phosphate is bound by residues Gly156, 182–183 (AG), and 204–205 (AS).

This sequence belongs to the ThiG family. In terms of assembly, homotetramer. Forms heterodimers with either ThiH or ThiS.

Its subcellular location is the cytoplasm. It carries out the reaction [ThiS sulfur-carrier protein]-C-terminal-Gly-aminoethanethioate + 2-iminoacetate + 1-deoxy-D-xylulose 5-phosphate = [ThiS sulfur-carrier protein]-C-terminal Gly-Gly + 2-[(2R,5Z)-2-carboxy-4-methylthiazol-5(2H)-ylidene]ethyl phosphate + 2 H2O + H(+). It participates in cofactor biosynthesis; thiamine diphosphate biosynthesis. Its function is as follows. Catalyzes the rearrangement of 1-deoxy-D-xylulose 5-phosphate (DXP) to produce the thiazole phosphate moiety of thiamine. Sulfur is provided by the thiocarboxylate moiety of the carrier protein ThiS. In vitro, sulfur can be provided by H(2)S. This Corynebacterium aurimucosum (strain ATCC 700975 / DSM 44827 / CIP 107346 / CN-1) (Corynebacterium nigricans) protein is Thiazole synthase.